Reading from the N-terminus, the 2345-residue chain is Acetyl-CoA carboxylase 1 (2345 aa).

Position 1 is an N-acetylmethionine (Met-1). 8 positions are modified to phosphoserine: Ser-5, Ser-23, Ser-25, Ser-29, Ser-34, Ser-47, Ser-49, and Ser-52. Position 57 is a phosphothreonine (Thr-57). Ser-77 and Ser-79 each carry phosphoserine. Ser-79 is subject to Phosphoserine; by AMPK. Residues 116-617 (VIEKVLIANN…DTGWLDRLIA (502 aa)) enclose the Biotin carboxylation domain. The region spanning 274-465 (SKRILNVPQD…LPAAQLQIAM (192 aa)) is the ATP-grasp domain. 300-357 (AEEVGYPVMIKASEGGGGKGIRKVNNADDFPNLFRQVQAEVPGSPIFVMRLAKQSRHL) provides a ligand contact to ATP. Positions 423, 436, and 438 each coordinate Mg(2+). Mn(2+)-binding residues include Glu-423, Glu-436, and Asn-438. Arg-440 is a catalytic residue. A Phosphothreonine modification is found at Thr-609. A Biotinyl-binding domain is found at 744–818 (FEKENDPSVM…DPGCVIAKMQ (75 aa)). Lys-785 bears the N6-biotinyllysine mark. Phosphoserine is present on residues Ser-834, Ser-1200, Ser-1215, and Ser-1217. Thr-1226 carries the post-translational modification Phosphothreonine. Phosphoserine occurs at positions 1258, 1262, and 1272. N6-acetyllysine is present on Lys-1333. The region spanning 1575–1913 (PYVTKDLLQS…SVHSSVPLLN (339 aa)) is the CoA carboxyltransferase N-terminal domain. Residues 1575–2233 (PYVTKDLLQS…EDLVKKKIHN (659 aa)) are carboxyltransferase. CoA is bound by residues Arg-1822, Lys-2126, and Arg-2128. Residues 1917–2233 (PIDRIIEFVP…EDLVKKKIHN (317 aa)) form the CoA carboxyltransferase C-terminal domain. Thr-2152 carries the phosphothreonine modification.

In terms of assembly, monomer, homodimer, and homotetramer. Can form filamentous polymers. Interacts in its inactive phosphorylated form with the BRCT domains of BRCA1 which prevents ACACA dephosphorylation and inhibits lipid synthesis. Interacts with MID1IP1; interaction with MID1IP1 promotes oligomerization and increases its activity. Mg(2+) is required as a cofactor. Requires Mn(2+) as cofactor. Biotin serves as cofactor. Post-translationally, phosphorylation on Ser-1262 is required for interaction with BRCA1. In terms of processing, phosphorylation at Ser-79 by AMPK inactivates enzyme activity. The biotin cofactor is covalently attached to the central biotinyl-binding domain and is required for the catalytic activity.

The protein resides in the cytoplasm. Its subcellular location is the cytosol. It carries out the reaction hydrogencarbonate + acetyl-CoA + ATP = malonyl-CoA + ADP + phosphate + H(+). It participates in lipid metabolism; malonyl-CoA biosynthesis; malonyl-CoA from acetyl-CoA: step 1/1. Inhibited by phosphorylation. Citrate promotes oligomerization of the protein into filaments that correspond to the most active form of the carboxylase. Its function is as follows. Cytosolic enzyme that catalyzes the carboxylation of acetyl-CoA to malonyl-CoA, the first and rate-limiting step of de novo fatty acid biosynthesis. This is a 2 steps reaction starting with the ATP-dependent carboxylation of the biotin carried by the biotin carboxyl carrier (BCC) domain followed by the transfer of the carboxyl group from carboxylated biotin to acetyl-CoA. In Mus musculus (Mouse), this protein is Acetyl-CoA carboxylase 1.